The following is a 216-amino-acid chain: Protein-L-isoaspartate O-methyltransferase (216 aa).

Ser-61 is a catalytic residue.

The protein belongs to the methyltransferase superfamily. L-isoaspartyl/D-aspartyl protein methyltransferase family.

It localises to the cytoplasm. The enzyme catalyses [protein]-L-isoaspartate + S-adenosyl-L-methionine = [protein]-L-isoaspartate alpha-methyl ester + S-adenosyl-L-homocysteine. In terms of biological role, catalyzes the methyl esterification of L-isoaspartyl residues in peptides and proteins that result from spontaneous decomposition of normal L-aspartyl and L-asparaginyl residues. It plays a role in the repair and/or degradation of damaged proteins. In Dinoroseobacter shibae (strain DSM 16493 / NCIMB 14021 / DFL 12), this protein is Protein-L-isoaspartate O-methyltransferase.